We begin with the raw amino-acid sequence, 537 residues long: Zinc finger and BTB domain-containing protein 18 (537 aa).

One can recognise a BTB domain in the interval 24-91; that stretch reads CDSTVLVGDA…MYEGKLQFKS (68 aa). Residues 122–143 show a composition bias toward basic and acidic residues; the sequence is TAEADSTKREEDTSSCSDKVES. 2 disordered regions span residues 122–232 and 335–355; these read TAEA…RVSA and ASEL…LGGD. Low complexity-rich tracts occupy residues 182–195 and 208–229; these read RLPS…TTSP and SPAG…ASRR. 4 C2H2-type zinc fingers span residues 385-407, 425-447, 453-475, and 481-504; these read FMCP…LSTH, PTCS…ERTH, YTCT…AVVH, and HACK…RKFH.

It belongs to the krueppel C2H2-type zinc-finger protein family. ZBTB18 subfamily.

It localises to the nucleus. Transcriptional repressor that plays a role in various developmental processes. Specifically binds the consensus DNA sequence 5'-[AC]ACATCTG[GT][AC]-3' which contains the E box core, and acts by recruiting chromatin remodeling multiprotein complexes. The chain is Zinc finger and BTB domain-containing protein 18 (zbtb18) from Danio rerio (Zebrafish).